The chain runs to 437 residues: Serine carboxypeptidase-like 9 (437 aa).

Residues 1 to 21 (MSLILKFMLLILLVSSHHVRS) form the signal peptide. Residue asparagine 101 is glycosylated (N-linked (GlcNAc...) asparagine). Serine 175 is a catalytic residue. 2 cysteine pairs are disulfide-bonded: cysteine 243–cysteine 257 and cysteine 281–cysteine 293. N-linked (GlcNAc...) asparagine glycans are attached at residues asparagine 307 and asparagine 346. The active site involves aspartate 362. Asparagine 378 carries N-linked (GlcNAc...) asparagine glycosylation. Residue histidine 415 is part of the active site.

The protein belongs to the peptidase S10 family. In terms of tissue distribution, expressed in seedlings, leaves, flowers and siliques.

The protein localises to the secreted. The enzyme catalyses 2 1-O-(trans-sinapoyl)-beta-D-glucose = 1,2-di-O-sinapoyl beta-D-glucose + D-glucose. In terms of biological role, catalyzes the formation of 1,2-bis-O-sinapoyl beta-D-glucoside and an unidentified compound 1. The polypeptide is Serine carboxypeptidase-like 9 (SCPL9) (Arabidopsis thaliana (Mouse-ear cress)).